The sequence spans 256 residues: Thiazole synthase (256 aa).

The active-site Schiff-base intermediate with DXP is Lys99. Residues Gly160, 186–187 (AG), and 208–209 (NT) each bind 1-deoxy-D-xylulose 5-phosphate.

The protein belongs to the ThiG family. In terms of assembly, homotetramer. Forms heterodimers with either ThiH or ThiS.

It is found in the cytoplasm. It carries out the reaction [ThiS sulfur-carrier protein]-C-terminal-Gly-aminoethanethioate + 2-iminoacetate + 1-deoxy-D-xylulose 5-phosphate = [ThiS sulfur-carrier protein]-C-terminal Gly-Gly + 2-[(2R,5Z)-2-carboxy-4-methylthiazol-5(2H)-ylidene]ethyl phosphate + 2 H2O + H(+). The protein operates within cofactor biosynthesis; thiamine diphosphate biosynthesis. Catalyzes the rearrangement of 1-deoxy-D-xylulose 5-phosphate (DXP) to produce the thiazole phosphate moiety of thiamine. Sulfur is provided by the thiocarboxylate moiety of the carrier protein ThiS. In vitro, sulfur can be provided by H(2)S. This Neorickettsia sennetsu (strain ATCC VR-367 / Miyayama) (Ehrlichia sennetsu) protein is Thiazole synthase.